A 153-amino-acid polypeptide reads, in one-letter code: Prostaglandin E synthase (153 aa).

The Lumenal segment spans residues 1 to 13; the sequence is MTSLGLVMENSQV. The chain crosses the membrane as a helical span at residues 14 to 42; the sequence is LPAFLLCSTLLVIKMYAVAVITGQVRLRK. Glutathione is bound at residue Arg39. At 43-61 the chain is on the cytoplasmic side; sequence KAFANPEDALKRGGLQYCR. Residues 62-91 form a helical membrane-spanning segment; that stretch reads SDPDVERCLRAHRNDMETIYPFLFLGFVYS. 74-78 is a glutathione binding site; sequence RNDME. Topologically, residues 92–98 are lumenal; sequence FLGPNPL. The helical transmembrane segment at 99–120 threads the bilayer; it reads IAWIHFLVVLTGRVVHTVAYLG. 2 residues coordinate glutathione: His114 and Tyr118. Residues 121 to 124 are Cytoplasmic-facing; that stretch reads KMNP. Residues 125 to 153 form a helical membrane-spanning segment; sequence RIRSGAYVLAQFACFSMALQILWEVAHHL. 127–131 is a glutathione binding site; it reads RSGAY.

Belongs to the MAPEG family. Glutathione is required as a cofactor.

The protein localises to the membrane. It is found in the cytoplasm. It localises to the perinuclear region. The catalysed reaction is prostaglandin H2 = prostaglandin E2. The enzyme catalyses 2-glyceryl-prostaglandin H2 = 2-glyceryl-prostaglandin E2. It carries out the reaction prostaglandin G2 = (15S)-15-hydroperoxy-prostaglandin E2. It catalyses the reaction 1-chloro-2,4-dinitrobenzene + glutathione = 2,4-dinitrophenyl-S-glutathione + chloride + H(+). The catalysed reaction is (5S)-hydroperoxy-(6E,8Z,11Z,14Z)-eicosatetraenoate + 2 glutathione = (5S)-hydroxy-(6E,8Z,11Z,14Z)-eicosatetraenoate + glutathione disulfide + H2O. It functions in the pathway lipid metabolism; prostaglandin biosynthesis. Its activity is regulated as follows. Activity is increased following LPS stimulation and down-regulated by the anti-inflammatory glucocorticoid dexamethasone. Functionally, terminal enzyme of the cyclooxygenase (COX)-2-mediated prostaglandin E2 (PGE2) biosynthetic pathway. Catalyzes the glutathione-dependent oxidoreduction of prostaglandin endoperoxide H2 (PGH2) to prostaglandin E2 (PGE2) in response to inflammatory stimuli. Plays a key role in inflammation response, fever and pain. Also catalyzes the oxidoreduction of endocannabinoids into prostaglandin glycerol esters and PGG2 into 15-hydroperoxy-PGE2. In addition, displays low glutathione transferase and glutathione-dependent peroxidase activities, toward 1-chloro-2,4-dinitrobenzene and 5-hydroperoxyicosatetraenoic acid (5-HPETE), respectively. The protein is Prostaglandin E synthase (Ptges) of Rattus norvegicus (Rat).